The chain runs to 190 residues: Nucleoside triphosphate pyrophosphatase (190 aa).

The active-site Proton acceptor is Asp-69.

Belongs to the Maf family. Requires a divalent metal cation as cofactor.

It is found in the cytoplasm. The enzyme catalyses a ribonucleoside 5'-triphosphate + H2O = a ribonucleoside 5'-phosphate + diphosphate + H(+). It carries out the reaction a 2'-deoxyribonucleoside 5'-triphosphate + H2O = a 2'-deoxyribonucleoside 5'-phosphate + diphosphate + H(+). Functionally, nucleoside triphosphate pyrophosphatase. May have a dual role in cell division arrest and in preventing the incorporation of modified nucleotides into cellular nucleic acids. This Helicobacter pylori (strain Shi470) protein is Nucleoside triphosphate pyrophosphatase.